The following is a 358-amino-acid chain: E3 ubiquitin-protein ligase RFI2 (358 aa).

The disordered stretch occupies residues 1 to 34 (MAGAKDSGCDDDLRIAGGCDPGKRGNPEDSSSPV). Residues 38–83 (CSICLESVLDDGTRSKAKLQCGHQFHLDCIGSAFNMKGAMQCPNCR) form an RING-type; atypical zinc finger. Disordered stretches follow at residues 174–201 (GPAA…DHFH) and 248–313 (SNQR…DQNV). The span at 187–201 (TDDHPWNSHSNDHFH) shows a compositional bias: basic and acidic residues. A compositionally biased stretch (polar residues) spans 248-266 (SNQRSSPAINSYQGSSTQM). Positions 299 to 309 (LPPPPPPPPMP) are enriched in pro residues.

It localises to the nucleus. It catalyses the reaction S-ubiquitinyl-[E2 ubiquitin-conjugating enzyme]-L-cysteine + [acceptor protein]-L-lysine = [E2 ubiquitin-conjugating enzyme]-L-cysteine + N(6)-ubiquitinyl-[acceptor protein]-L-lysine.. It functions in the pathway protein modification; protein ubiquitination. In terms of biological role, mediates phytochrome (phyA and phyB)-controlled seedling deetiolation responses such as hypocotyl elongation in response to red and far-red light. Required for light-induced expression of LHCB3 and CHALCONE SYNTHASE (CHS). Negatively regulates CONSTANS (CO) and FLOWERING LOCUS T (FT) expression and photoperiodic flowering. This chain is E3 ubiquitin-protein ligase RFI2, found in Arabidopsis thaliana (Mouse-ear cress).